The chain runs to 623 residues: (-)-limonene synthase TPS1, chloroplastic (623 aa).

The N-terminal 60 residues, 1–60 (MQCIAFHQFASSSSLPIWSSIDNRFTPKTSITSISKPKPKLKSKSNLKSRSRSSTCYPIQ), are a transit peptide targeting the chloroplast. The tract at residues 29–52 (TSITSISKPKPKLKSKSNLKSRSR) is disordered. Basic residues predominate over residues 37 to 51 (PKPKLKSKSNLKSRS). 5 residues coordinate (2E)-geranyl diphosphate: arginine 337, aspartate 374, aspartate 378, arginine 516, and aspartate 519. Aspartate 374 and aspartate 378 together coordinate Mg(2+). Positions 374-378 (DDMHD) match the DDXXD motif motif. 3 residues coordinate Mg(2+): aspartate 519, threonine 523, and glutamate 527.

Belongs to the terpene synthase family. Tpsb subfamily. The cofactor is Mg(2+). Mn(2+) is required as a cofactor. It depends on K(+) as a cofactor. As to expression, trichome.

It is found in the plastid. The protein resides in the chloroplast. It carries out the reaction (2E)-geranyl diphosphate = (4S)-limonene + diphosphate. It catalyses the reaction (2E)-geranyl diphosphate = terpinolene + diphosphate. The catalysed reaction is (2E)-geranyl diphosphate = (1R,5R)-alpha-pinene + diphosphate. The enzyme catalyses (2E)-geranyl diphosphate = (1R,5R)-beta-pinene + diphosphate. It carries out the reaction (2E)-geranyl diphosphate = beta-myrcene + diphosphate. It catalyses the reaction (2E)-geranyl diphosphate = (4R)-limonene + diphosphate. Its pathway is secondary metabolite biosynthesis; terpenoid biosynthesis. It functions in the pathway terpene metabolism; (4S)-limonene biosynthesis; (4S)-limonene from geranyl diphosphate: step 1/1. Involved in monoterpene (C10) olefins biosynthesis, constituants of cannabinoids and terpenoids-rich resins. Catalyzes mainly the conversion of (2E)-geranyl diphosphate to (-)-limonene, and also produces minor products such as (+)-limonene, (+)-alpha-pinene, terpinolene, (+)-beta-pinene and beta-myrcene. The protein is (-)-limonene synthase TPS1, chloroplastic of Cannabis sativa (Hemp).